Here is a 212-residue protein sequence, read N- to C-terminus: Redox-sensing transcriptional repressor Rex (212 aa).

A DNA-binding region (H-T-H motif) is located at residues 17-56 (KYHRYLQELMENDVDRISSKELSEKIGFTASQIRQDLNCF). 91–96 (GAGNIG) provides a ligand contact to NAD(+).

It belongs to the transcriptional regulatory Rex family. Homodimer.

The protein resides in the cytoplasm. Functionally, modulates transcription in response to changes in cellular NADH/NAD(+) redox state. The chain is Redox-sensing transcriptional repressor Rex from Clostridium perfringens (strain ATCC 13124 / DSM 756 / JCM 1290 / NCIMB 6125 / NCTC 8237 / Type A).